A 392-amino-acid polypeptide reads, in one-letter code: Acetyl-CoA acetyltransferase (392 aa).

The active-site Acyl-thioester intermediate is C89. Catalysis depends on proton acceptor residues H348 and C378.

This sequence belongs to the thiolase-like superfamily. Thiolase family. As to quaternary structure, homotetramer.

It is found in the cytoplasm. It carries out the reaction 2 acetyl-CoA = acetoacetyl-CoA + CoA. Its pathway is biopolymer metabolism; poly-(R)-3-hydroxybutanoate biosynthesis. The protein operates within metabolic intermediate biosynthesis; (R)-mevalonate biosynthesis; (R)-mevalonate from acetyl-CoA: step 1/3. The chain is Acetyl-CoA acetyltransferase from Shinella zoogloeoides (Crabtreella saccharophila).